The sequence spans 327 residues: Serine/threonine-protein phosphatase PP2A catalytic subunit (327 aa).

Mn(2+) is bound by residues Asp-75, His-77, Asp-103, and Asn-135. The Proton donor role is filled by His-136. Positions 185 and 259 each coordinate Mn(2+). Leu-327 carries the leucine methyl ester modification.

The protein belongs to the PPP phosphatase family. PP-2A subfamily. Mn(2+) is required as a cofactor.

It catalyses the reaction O-phospho-L-seryl-[protein] + H2O = L-seryl-[protein] + phosphate. The catalysed reaction is O-phospho-L-threonyl-[protein] + H2O = L-threonyl-[protein] + phosphate. This is Serine/threonine-protein phosphatase PP2A catalytic subunit (pph-1) from Neurospora crassa (strain ATCC 24698 / 74-OR23-1A / CBS 708.71 / DSM 1257 / FGSC 987).